An 82-amino-acid chain; its full sequence is uncharacterized protein (82 aa).

A disordered region spans residues 60–82; it reads YKRRRPDHMMKRNSPSYTGDHKT.

This is an uncharacterized protein from Saccharomyces cerevisiae (strain ATCC 204508 / S288c) (Baker's yeast).